The sequence spans 163 residues: NADH-quinone oxidoreductase subunit I (163 aa).

2 4Fe-4S ferredoxin-type domains span residues 53–83 (LRRY…IEAG) and 94–123 (TLYD…LTPE). Residues Cys-63, Cys-66, Cys-69, Cys-73, Cys-103, Cys-106, Cys-109, and Cys-113 each coordinate [4Fe-4S] cluster.

This sequence belongs to the complex I 23 kDa subunit family. As to quaternary structure, NDH-1 is composed of 14 different subunits. Subunits NuoA, H, J, K, L, M, N constitute the membrane sector of the complex. [4Fe-4S] cluster serves as cofactor.

It localises to the cell inner membrane. It catalyses the reaction a quinone + NADH + 5 H(+)(in) = a quinol + NAD(+) + 4 H(+)(out). Functionally, NDH-1 shuttles electrons from NADH, via FMN and iron-sulfur (Fe-S) centers, to quinones in the respiratory chain. The immediate electron acceptor for the enzyme in this species is believed to be ubiquinone. Couples the redox reaction to proton translocation (for every two electrons transferred, four hydrogen ions are translocated across the cytoplasmic membrane), and thus conserves the redox energy in a proton gradient. This is NADH-quinone oxidoreductase subunit I from Coxiella burnetii (strain Dugway 5J108-111).